Consider the following 141-residue polypeptide: VLSPADKTNVKAAWEKVGGHGAAYGAEALERMFLSFPTTKTYFPHFDLSHGSAQVQGHGKKVADALANAAGHLDDLPSALSALSDLHAHKLRVDPVNFKLLSHCLLVTLAAHHPAEFTPAVHASLDKFLATVSTVLTSKYR.

Residues Val1–Arg141 form the Globin domain. The residue at position 3 (Ser3) is a Phosphoserine. Residue Lys7 is modified to N6-succinyllysine. Thr8 carries the post-translational modification Phosphothreonine. Position 11 is an N6-succinyllysine (Lys11). The residue at position 16 (Lys16) is an N6-acetyllysine; alternate. Lys16 carries the N6-succinyllysine; alternate modification. Residue Tyr24 is modified to Phosphotyrosine. Ser35 is subject to Phosphoserine. An N6-succinyllysine modification is found at Lys40. Position 49 is a phosphoserine (Ser49). Residue His58 coordinates O2. His87 is a binding site for heme b. Ser102 is subject to Phosphoserine. At Thr108 the chain carries Phosphothreonine. Residue Ser124 is modified to Phosphoserine. A phosphothreonine mark is found at Thr134 and Thr137. At Ser138 the chain carries Phosphoserine.

The protein belongs to the globin family. As to quaternary structure, heterotetramer of two alpha chains and two beta chains. Red blood cells.

Involved in oxygen transport from the lung to the various peripheral tissues. The sequence is that of Hemoglobin subunit alpha from Tamias merriami (Merriam's chipmunk).